Consider the following 260-residue polypeptide: Snake venom serine protease homolog KN7 (260 aa).

The signal sequence occupies residues 1–18; sequence MVLIRVLANLLILQLSYA. Residues 19–24 constitute a propeptide that is removed on maturation; the sequence is QKSSEL. Residues 25–251 form the Peptidase S1 domain; it reads IIGGDECNIN…HLDWIKSIIA (227 aa). Cystine bridges form between Cys31–Cys165, Cys52–Cys68, Cys100–Cys258, Cys144–Cys212, Cys176–Cys191, and Cys202–Cys227. Residues Asn83, Asn123, and Asn124 are each glycosylated (N-linked (GlcNAc...) asparagine).

The protein belongs to the peptidase S1 family. Snake venom subfamily. Expressed by the venom gland.

The protein localises to the secreted. Its function is as follows. Snake venom serine protease homolog that may act in the hemostasis system of the prey. This Trimeresurus stejnegeri (Chinese green tree viper) protein is Snake venom serine protease homolog KN7.